A 126-amino-acid polypeptide reads, in one-letter code: Phosphoribosyl-AMP cyclohydrolase (126 aa).

Asp76 is a Mg(2+) binding site. Cys77 lines the Zn(2+) pocket. Mg(2+) contacts are provided by Asp78 and Asp80. Zn(2+) contacts are provided by Cys94 and Cys101.

The protein belongs to the PRA-CH family. As to quaternary structure, homodimer. Mg(2+) is required as a cofactor. Requires Zn(2+) as cofactor.

The protein resides in the cytoplasm. It catalyses the reaction 1-(5-phospho-beta-D-ribosyl)-5'-AMP + H2O = 1-(5-phospho-beta-D-ribosyl)-5-[(5-phospho-beta-D-ribosylamino)methylideneamino]imidazole-4-carboxamide. The protein operates within amino-acid biosynthesis; L-histidine biosynthesis; L-histidine from 5-phospho-alpha-D-ribose 1-diphosphate: step 3/9. Functionally, catalyzes the hydrolysis of the adenine ring of phosphoribosyl-AMP. In Vesicomyosocius okutanii subsp. Calyptogena okutanii (strain HA), this protein is Phosphoribosyl-AMP cyclohydrolase.